We begin with the raw amino-acid sequence, 238 residues long: Ribonuclease PH (238 aa).

Phosphate contacts are provided by residues R86 and 124-126; that span reads GTR.

This sequence belongs to the RNase PH family. As to quaternary structure, homohexameric ring arranged as a trimer of dimers.

It carries out the reaction tRNA(n+1) + phosphate = tRNA(n) + a ribonucleoside 5'-diphosphate. In terms of biological role, phosphorolytic 3'-5' exoribonuclease that plays an important role in tRNA 3'-end maturation. Removes nucleotide residues following the 3'-CCA terminus of tRNAs; can also add nucleotides to the ends of RNA molecules by using nucleoside diphosphates as substrates, but this may not be physiologically important. Probably plays a role in initiation of 16S rRNA degradation (leading to ribosome degradation) during starvation. The protein is Ribonuclease PH of Vibrio cholerae serotype O1 (strain ATCC 39315 / El Tor Inaba N16961).